The sequence spans 680 residues: DNA-directed RNA polymerase subunit beta' (680 aa).

Residues cysteine 69, cysteine 71, cysteine 87, and cysteine 90 each contribute to the Zn(2+) site. Mg(2+) contacts are provided by aspartate 489, aspartate 491, and aspartate 493.

Belongs to the RNA polymerase beta' chain family. RpoC1 subfamily. In plastids the minimal PEP RNA polymerase catalytic core is composed of four subunits: alpha, beta, beta', and beta''. When a (nuclear-encoded) sigma factor is associated with the core the holoenzyme is formed, which can initiate transcription. It depends on Mg(2+) as a cofactor. The cofactor is Zn(2+).

It localises to the plastid. The protein resides in the chloroplast. It catalyses the reaction RNA(n) + a ribonucleoside 5'-triphosphate = RNA(n+1) + diphosphate. Functionally, DNA-dependent RNA polymerase catalyzes the transcription of DNA into RNA using the four ribonucleoside triphosphates as substrates. The polypeptide is DNA-directed RNA polymerase subunit beta' (Capsella bursa-pastoris (Shepherd's purse)).